The chain runs to 248 residues: 3-deoxy-manno-octulosonate cytidylyltransferase (248 aa).

This sequence belongs to the KdsB family.

The protein resides in the cytoplasm. The catalysed reaction is 3-deoxy-alpha-D-manno-oct-2-ulosonate + CTP = CMP-3-deoxy-beta-D-manno-octulosonate + diphosphate. The protein operates within nucleotide-sugar biosynthesis; CMP-3-deoxy-D-manno-octulosonate biosynthesis; CMP-3-deoxy-D-manno-octulosonate from 3-deoxy-D-manno-octulosonate and CTP: step 1/1. It participates in bacterial outer membrane biogenesis; lipopolysaccharide biosynthesis. In terms of biological role, activates KDO (a required 8-carbon sugar) for incorporation into bacterial lipopolysaccharide in Gram-negative bacteria. The polypeptide is 3-deoxy-manno-octulosonate cytidylyltransferase (Escherichia fergusonii (strain ATCC 35469 / DSM 13698 / CCUG 18766 / IAM 14443 / JCM 21226 / LMG 7866 / NBRC 102419 / NCTC 12128 / CDC 0568-73)).